The following is a 113-amino-acid chain: U11-theraphotoxin-Hhn1k (113 aa).

The N-terminal stretch at 1–21 (MNTVRVTFLLVFVLAVSLGQA) is a signal peptide. A propeptide spanning residues 22 to 74 (DKDENRMEMQEKTEQGKSYLDFAENLLLQKLEELEAKLLEEDSEESRNSRQKR) is cleaved from the precursor. A disordered region spans residues 61 to 83 (EEDSEESRNSRQKRCIGEGVPCD). Disulfide bonds link cysteine 75-cysteine 90, cysteine 82-cysteine 95, and cysteine 89-cysteine 110.

Belongs to the neurotoxin 14 (magi-1) family. 01 (HNTX-16) subfamily. In terms of tissue distribution, expressed by the venom gland.

The protein localises to the secreted. Functionally, probable ion channel inhibitor. The protein is U11-theraphotoxin-Hhn1k of Cyriopagopus hainanus (Chinese bird spider).